The following is a 744-amino-acid chain: MRDVLEVLEFPRVRALLAERAKTPLGRELALALAPLPREEAEKRHELTGEALSYPYALPEAGTLREAYGRALAGARLSGPELLKAAKALEEAMALKEELLPLKNALSQVAEGIGDHTPFLERVRKALDEEGAVKDEASPRLAQIRRELRPLRQQILDRLYALMDRHREAFQDRFVTLRRERYCVPVRAGMAQKVPGILLDESESGATLFIEPFSVVKLNNRLQALRLKEEEEVNRILRDLSERLAKDEGVPKTLEALGLLDLVQAQAALARDLGLSRPAFGERYELYRAFHPLIPDAVRNSFALDEKNRILLISGPNMGGKTALLKTLGLAVLMAQSGLFVAAEKALLAWPDRVYADIGDEQSLQENLSTFAGHLRRLREMLEEATSHSLVLIDELGSGTDPEEGAALSQAILEALLERGVKGMVTTHLSPLKAFAQGREGIQNASMRFDLEALRPTYELVLGVPGRSYALAIARRLALPEEVLKRAEALLPEGGRLEALLERLEAERLALEAERERLRRELSQVERLRKALAEREARFEEERAERLKALEEEVRAELLKVEAELKALKEKARTEGKRDALRELMALRERYAKKAPPPPPPPGLAPGVLVEVPSLGKRGRVVELRGEEVLVQVGPLKMSLKPQEVKPLPEAEPGKPLLAKPRREVKEVDLRGLTVAEALLEVDQALEEARALGLSTLRLLHGKGTGALRQAIREALRRDKRVESFADAPPGEGGHGVTVVALRP.

315-322 (GPNMGGKT) provides a ligand contact to ATP. One can recognise a Smr domain in the interval 668 to 743 (VDLRGLTVAE…GHGVTVVALR (76 aa)).

The protein belongs to the DNA mismatch repair MutS family. MutS2 subfamily. As to quaternary structure, homodimer. Interacts with MutL. Binds to stalled ribosomes, contacting rRNA.

With respect to regulation, nuclease activity is stimulated by interaction with MutL. ATPase activity is stimulated by dsDNA. In terms of biological role, endonuclease that is involved in the suppression of homologous recombination and may thus have a key role in the control of bacterial genetic diversity. Cleaves the phosphate backbone of oligodeoxynucleotides non-sequence-specifically at the 3' side of the phosphates. Preferably incises the branched DNA structures, especially the D-loop structure over the Holliday junction. Has ATPase activity. Binds to dsDNA but not to ssDNA. Functionally, acts as a ribosome collision sensor, splitting the ribosome into its 2 subunits. Detects stalled/collided 70S ribosomes which it binds and splits by an ATP-hydrolysis driven conformational change. Acts upstream of the ribosome quality control system (RQC), a ribosome-associated complex that mediates the extraction of incompletely synthesized nascent chains from stalled ribosomes and their subsequent degradation. Probably generates substrates for RQC. The protein is Endonuclease MutS2 of Thermus thermophilus (strain ATCC 27634 / DSM 579 / HB8).